A 367-amino-acid polypeptide reads, in one-letter code: Queuine tRNA-ribosyltransferase (367 aa).

The active-site Proton acceptor is the D92. Substrate-binding positions include 92-96 (DSGGF), D146, Q188, and G215. An RNA binding region spans residues 246–252 (GVGTPKD). D265 serves as the catalytic Nucleophile. Residues C303, C305, C308, and H334 each coordinate Zn(2+).

Belongs to the queuine tRNA-ribosyltransferase family. As to quaternary structure, homodimer. Within each dimer, one monomer is responsible for RNA recognition and catalysis, while the other monomer binds to the replacement base PreQ1. The cofactor is Zn(2+).

The catalysed reaction is 7-aminomethyl-7-carbaguanine + guanosine(34) in tRNA = 7-aminomethyl-7-carbaguanosine(34) in tRNA + guanine. It participates in tRNA modification; tRNA-queuosine biosynthesis. Functionally, catalyzes the base-exchange of a guanine (G) residue with the queuine precursor 7-aminomethyl-7-deazaguanine (PreQ1) at position 34 (anticodon wobble position) in tRNAs with GU(N) anticodons (tRNA-Asp, -Asn, -His and -Tyr). Catalysis occurs through a double-displacement mechanism. The nucleophile active site attacks the C1' of nucleotide 34 to detach the guanine base from the RNA, forming a covalent enzyme-RNA intermediate. The proton acceptor active site deprotonates the incoming PreQ1, allowing a nucleophilic attack on the C1' of the ribose to form the product. After dissociation, two additional enzymatic reactions on the tRNA convert PreQ1 to queuine (Q), resulting in the hypermodified nucleoside queuosine (7-(((4,5-cis-dihydroxy-2-cyclopenten-1-yl)amino)methyl)-7-deazaguanosine). The sequence is that of Queuine tRNA-ribosyltransferase from Francisella tularensis subsp. novicida (strain U112).